Reading from the N-terminus, the 314-residue chain is tRNA dimethylallyltransferase (314 aa).

12–19 lines the ATP pocket; the sequence is GPTAAGKS. 14–19 provides a ligand contact to substrate; it reads TAAGKS. 3 interaction with substrate tRNA regions span residues 37 to 40, 161 to 165, and 245 to 250; these read DSAT, QRIQR, and RCVGYR.

Belongs to the IPP transferase family. As to quaternary structure, monomer. Mg(2+) is required as a cofactor.

The catalysed reaction is adenosine(37) in tRNA + dimethylallyl diphosphate = N(6)-dimethylallyladenosine(37) in tRNA + diphosphate. In terms of biological role, catalyzes the transfer of a dimethylallyl group onto the adenine at position 37 in tRNAs that read codons beginning with uridine, leading to the formation of N6-(dimethylallyl)adenosine (i(6)A). This Bordetella petrii (strain ATCC BAA-461 / DSM 12804 / CCUG 43448) protein is tRNA dimethylallyltransferase.